The sequence spans 715 residues: Nucleolar protein 9 (715 aa).

A disordered region spans residues 1 to 52; that stretch reads MPKPRGRRVQSAFKERVENSEATHENSIAETGSDVEISLHEDQPQTSDNKNQ. Positions 13–24 are enriched in basic and acidic residues; it reads FKERVENSEATH. 8 Pumilio repeats span residues 99–134, 135–170, 206–243, 291–326, 340–377, 379–415, 531–568, and 575–613; these read ESRGKELKLVTNQICSKLMERLVLLASDRQLKHIFH, QFLGHFPALAHHKYSSHVLETLLVRSAALIEKEIVN, QLEPYWSSMIQHQYASHVMRIIILIVSGKELPSSTMAN, LDTKSARSLAIHKVASPVLQLIIRVEGIVDKERSVW, SEEAFVEYLLSDSVGSHFLEAIIKNDGARMKYIERLYR, YMKDRVLKLARRATTGVYIIQALLLKLKPGEVEHILD, LPQERLMQMCFHGVFSHVIEHALVVKPASEGEPKEVLI, and NLFQGKIFELACNSYGSHIVDKLWDFTVLLPMYKDRIAS. A compositionally biased stretch (basic and acidic residues) spans 688-698; sequence YQEERAKREGE. The interval 688–715 is disordered; it reads YQEERAKREGEDLAGSNQKRMKGRGRNR. Basic residues predominate over residues 706-715; the sequence is KRMKGRGRNR.

It belongs to the NOP9 family.

The protein resides in the nucleus. The protein localises to the nucleolus. Functionally, RNA-binding nucleolar protein required for pre-rRNA processing. Involved in production of 18S rRNA and assembly of small ribosomal subunit. The protein is Nucleolar protein 9 (NOP9) of Clavispora lusitaniae (strain ATCC 42720) (Yeast).